We begin with the raw amino-acid sequence, 284 residues long: Tropomyosin alpha-1 chain (284 aa).

Met1 carries the N-acetylmethionine modification. A disordered region spans residues 1–38 (MDAIKKKMQMLKLDKENALDRAEQAEADKKAAEDRSKQ). Positions 1–284 (MDAIKKKMQM…DHALNDMTSI (284 aa)) form a coiled coil. Residues 12–38 (KLDKENALDRAEQAEADKKAAEDRSKQ) are compositionally biased toward basic and acidic residues. 3 positions are modified to phosphoserine: Ala31, Ser45, and Lys51. The interval 116 to 136 (AEKAADESERGMKVIESRAQK) is disordered. Residues Ser174, Ser186, and Ser206 each carry the phosphoserine modification. The residue at position 213 (Lys213) is an N6-acetyllysine. Residue Ser252 is modified to Phosphoserine. The residue at position 261 (Tyr261) is a Phosphotyrosine. Phosphoserine is present on Ser271. Residue Ser283 is modified to Phosphoserine; by DAPK1.

The protein belongs to the tropomyosin family. As to quaternary structure, homodimer. Heterodimer of an alpha (TPM1, TPM3 or TPM4) and a beta (TPM2) chain. Interacts with HRG (via the HRR domain); the interaction contributes to the antiangiogenic properties of the histidine/proline-rich region (HRR) of HRG. Interacts (via N-terminus) with LMOD2 (via N-terminus) and TMOD1 (via N-terminus). Post-translationally, phosphorylated at Ser-283 by DAPK1 in response to oxidative stress and this phosphorylation enhances stress fiber formation in endothelial cells. In terms of tissue distribution, detected in primary breast cancer tissues but undetectable in normal breast tissues in Sudanese patients. Isoform 1 is expressed in adult and fetal skeletal muscle and cardiac tissues, with higher expression levels in the cardiac tissues. Isoform 10 is expressed in adult and fetal cardiac tissues, but not in skeletal muscle.

The protein localises to the cytoplasm. The protein resides in the cytoskeleton. Binds to actin filaments in muscle and non-muscle cells. Plays a central role, in association with the troponin complex, in the calcium dependent regulation of vertebrate striated muscle contraction. Smooth muscle contraction is regulated by interaction with caldesmon. In non-muscle cells is implicated in stabilizing cytoskeleton actin filaments. This Homo sapiens (Human) protein is Tropomyosin alpha-1 chain (TPM1).